The chain runs to 67 residues: UPF0337 protein Atu4724 (67 aa).

Belongs to the UPF0337 (CsbD) family.

This chain is UPF0337 protein Atu4724, found in Agrobacterium fabrum (strain C58 / ATCC 33970) (Agrobacterium tumefaciens (strain C58)).